We begin with the raw amino-acid sequence, 628 residues long: Inactive sodium-dependent neutral amino acid transporter B(0)AT3 (628 aa).

Residues 1-26 (MAHAPEPDPAACDLGDERPKWDNKAQ) lie on the Cytoplasmic side of the membrane. Residues 27–47 (YLLSCTGFAVGLGNIWRFPYL) form a helical membrane-spanning segment. Over 48–51 (CQTY) the chain is Extracellular. The chain crosses the membrane as a helical span at residues 52 to 74 (GGGAFLIPYVIALVFEGIPIFHV). The Cytoplasmic portion of the chain corresponds to 75-88 (ELAIGQRLRKGSVG). The chain crosses the membrane as a helical span at residues 89–111 (VWTAISPYLSGVGLGCVTLSFLI). The Extracellular segment spans residues 112–178 (SLYYNTIVAW…ITADINDSGS (67 aa)). N-linked (GlcNAc...) asparagine glycans are attached at residues Asn144, Asn168, and Asn174. A helical membrane pass occupies residues 179–201 (IQWWLLICLAASWAVVYMCVIRG). Residues 202–207 (IETTGK) are Cytoplasmic-facing. Residues 208–230 (VIYFTALFPYLVLTIFLIRGLTL) form a helical membrane-spanning segment. Residues 231 to 253 (PGATKGLIYLFTPNMHILQNPRV) are Extracellular-facing. A helical transmembrane segment spans residues 254–276 (WLDAATQIFFSLSLAFGGHIAFA). The Cytoplasmic portion of the chain corresponds to 277–288 (SYNSPRNDCQKD). Residues 289–311 (AVVIALVNRMTSLYASIAVFSVL) traverse the membrane as a helical segment. Topologically, residues 312 to 399 (GFKATNDYEH…TETDLHMPGA (88 aa)) are extracellular. Asn354 carries an N-linked (GlcNAc...) asparagine glycan. Residues 400 to 422 (PVWAMLFFGMLFTLGLSTMFGTV) form a helical membrane-spanning segment. Residues 423–442 (EAVITPLLDVGVLPRWVPKE) lie on the Cytoplasmic side of the membrane. Residues 443–465 (ALTGLVCLVCFLSATCFTLQSGN) form a helical membrane-spanning segment. Residues 466 to 474 (YWLEIFDNF) lie on the Extracellular side of the membrane. A helical transmembrane segment spans residues 475 to 497 (AASPNLLMLAFLEVVGVVYVYGM). Residues 498–517 (KRFCDDIAWMTGRRPSPYWR) lie on the Cytoplasmic side of the membrane. The chain crosses the membrane as a helical span at residues 518–540 (LTWRVVSPLLLTIFVAYIILLFW). The Extracellular segment spans residues 541-568 (KPLRYKAWNPKYELFPSRQEKLYPGWAR). A helical transmembrane segment spans residues 569 to 591 (AACVLLSLLPVLWVPVAALAQLL). At 592–628 (TRRRRTWRDRDARPDTDMRPDTDTRPDTDMRPDTDMR) the chain is on the cytoplasmic side. The tract at residues 602-628 (DARPDTDMRPDTDTRPDTDMRPDTDMR) is disordered.

This sequence belongs to the sodium:neurotransmitter symporter (SNF) (TC 2.A.22) family. SLC6A18 subfamily. As to expression, abundantly expressed in kidney, but not in intestine.

The protein localises to the membrane. In terms of biological role, does not show neutral amino acid transporter activity. This Homo sapiens (Human) protein is Inactive sodium-dependent neutral amino acid transporter B(0)AT3.